A 356-amino-acid chain; its full sequence is MTGKKSSREKRRKRSGQEAAASLAAPDLVPVLSGSAGGCGSGGCCGVAGGGTSVAGGAERSERRKRRSTDSSSSVSGSLQQETKYLLPSLEKELFLAEHSDLEEGGLDLNVSLKPVSFYISDKKEMLQQCFCIIGEKKLQKMLPDVLKNCSVEEIKKLCQEQLELLSEKQILKILEGDNGLDSDMEEEADDGCKVAPDLISQQDTCVDSTSSLRENKQPEVLESKQGKGEDSDVLSINADAYDSDIEGPSIDEAAAAATATPAATAVATAASEVPENTVQSEAGQIDDLERDIEKSVNEILGLAESSPKEPKVATLTVPPAEDVQPSAQQLELLELEMRARAIKALMKAGDIKKPV.

Residues 1–14 (MTGKKSSREKRRKR) are compositionally biased toward basic residues. Disordered stretches follow at residues 1–24 (MTGKKSSREKRRKRSGQEAAASLA) and 54–80 (VAGGAERSERRKRRSTDSSSSVSGSLQ). S68 is modified (phosphoserine). T69 carries the post-translational modification Phosphothreonine. K84 is covalently cross-linked (Glycyl lysine isopeptide (Lys-Gly) (interchain with G-Cter in SUMO2)). Phosphoserine occurs at positions 100 and 183. Positions 208 to 234 (DSTSSLRENKQPEVLESKQGKGEDSDV) are disordered. Basic and acidic residues predominate over residues 214–231 (RENKQPEVLESKQGKGED). A coiled-coil region spans residues 276–306 (ENTVQSEAGQIDDLERDIEKSVNEILGLAES). Phosphoserine is present on S307.

Its function is as follows. Anti-apoptotic protein that modulates a caspase-10 dependent mitochondrial caspase-3/9 feedback amplification loop. This Mus musculus (Mouse) protein is Caspase activity and apoptosis inhibitor 1 (Caap1).